Here is a 248-residue protein sequence, read N- to C-terminus: ATP synthase subunit a, chloroplastic (248 aa).

5 helical membrane-spanning segments follow: residues 38–58 (QVLL…VLTV), 96–116 (VPFI…GALV), 135–155 (INTT…AGLA), 200–220 (LVVA…VMLL), and 221–241 (GLFT…AYIG).

Belongs to the ATPase A chain family. As to quaternary structure, F-type ATPases have 2 components, CF(1) - the catalytic core - and CF(0) - the membrane proton channel. CF(1) has five subunits: alpha(3), beta(3), gamma(1), delta(1), epsilon(1). CF(0) has four main subunits: a, b, b' and c.

It is found in the plastid. The protein localises to the chloroplast thylakoid membrane. In terms of biological role, key component of the proton channel; it plays a direct role in the translocation of protons across the membrane. This chain is ATP synthase subunit a, chloroplastic, found in Welwitschia mirabilis (Tree tumbo).